The primary structure comprises 223 residues: Ras-related protein RABA4c (223 aa).

GTP is bound at residue 22–29 (GDSAVGKS). The short motif at 44-52 (SKATIGVEF) is the Effector region element. GTP-binding positions include 70–74 (DTAGQ), 128–131 (NKTD), and 158–159 (SA). Residues C219 and C220 are each lipidated (S-geranylgeranyl cysteine).

The protein belongs to the small GTPase superfamily. Rab family.

Its subcellular location is the cell membrane. Intracellular vesicle trafficking and protein transport. The polypeptide is Ras-related protein RABA4c (RABA4C) (Arabidopsis thaliana (Mouse-ear cress)).